The following is a 269-amino-acid chain: Chromosome-partitioning protein Spo0J (269 aa).

The stimulates ATPase activity of Soj by 8% stretch occupies residues 1-20 (MSRKPSGLGRGLEALLPKTG). The H-T-H motif DNA-binding region spans 137–156 (QEEVARRVGKARSTVANALR). The required for DNA-binding; may be responsible for dimerization stretch occupies residues 223–269 (PSPLSLELSRHLGLPVRVVGGKKGKVVIQYRSLEELEALLRRLGYQA).

It belongs to the ParB family. Homodimer, probably via the C-terminal 46 residues. Dimerization of the N-terminal H-T-H region may require DNA-binding. Probably interacts with ATPase Soj.

In terms of biological role, probably involved in chromosome partitioning. Binds to a plasmid centromere-like site parS. Stimulates the ATPase activity 10-fold of Soj; the first 20 residues may be responsible. The sequence is that of Chromosome-partitioning protein Spo0J (spo0C) from Thermus thermophilus (strain ATCC BAA-163 / DSM 7039 / HB27).